The sequence spans 33 residues: Cytochrome b6-f complex subunit 8 (33 aa).

A helical transmembrane segment spans residues 2–22; sequence LFTVAWASLAAMFSFSIAMVV.

This sequence belongs to the PetN family. As to quaternary structure, the 4 large subunits of the cytochrome b6-f complex are cytochrome b6, subunit IV (17 kDa polypeptide, PetD), cytochrome f and the Rieske protein, while the 4 small subunits are PetG, PetL, PetM and PetN. The complex functions as a dimer.

Its subcellular location is the cellular thylakoid membrane. Functionally, component of the cytochrome b6-f complex, which mediates electron transfer between photosystem II (PSII) and photosystem I (PSI), cyclic electron flow around PSI, and state transitions. This is Cytochrome b6-f complex subunit 8 from Parasynechococcus marenigrum (strain WH8102).